Reading from the N-terminus, the 452-residue chain is Bifunctional protein GlmU (452 aa).

Residues 1–226 (MSLSVVILAA…ATEVEGVNTR (226 aa)) are pyrophosphorylase. UDP-N-acetyl-alpha-D-glucosamine is bound by residues 8–11 (LAAG), Lys22, Gln73, 78–79 (GT), 100–102 (YGD), Gly137, Glu151, Asn166, and Asn224. Asp102 is a Mg(2+) binding site. Position 224 (Asn224) interacts with Mg(2+). The tract at residues 227–247 (LQLANLERAYQLKKATELLLS) is linker. The tract at residues 248-452 (GVMLRDPNRF…INNWKRPTKK (205 aa)) is N-acetyltransferase. Residues Arg330 and Lys348 each coordinate UDP-N-acetyl-alpha-D-glucosamine. His360 (proton acceptor) is an active-site residue. 2 residues coordinate UDP-N-acetyl-alpha-D-glucosamine: Tyr363 and Asn374. Acetyl-CoA contacts are provided by residues Ala377, 383 to 384 (NY), Ser402, Ala420, and Arg437.

In the N-terminal section; belongs to the N-acetylglucosamine-1-phosphate uridyltransferase family. The protein in the C-terminal section; belongs to the transferase hexapeptide repeat family. As to quaternary structure, homotrimer. Mg(2+) serves as cofactor.

The protein resides in the cytoplasm. The enzyme catalyses alpha-D-glucosamine 1-phosphate + acetyl-CoA = N-acetyl-alpha-D-glucosamine 1-phosphate + CoA + H(+). It catalyses the reaction N-acetyl-alpha-D-glucosamine 1-phosphate + UTP + H(+) = UDP-N-acetyl-alpha-D-glucosamine + diphosphate. The protein operates within nucleotide-sugar biosynthesis; UDP-N-acetyl-alpha-D-glucosamine biosynthesis; N-acetyl-alpha-D-glucosamine 1-phosphate from alpha-D-glucosamine 6-phosphate (route II): step 2/2. It participates in nucleotide-sugar biosynthesis; UDP-N-acetyl-alpha-D-glucosamine biosynthesis; UDP-N-acetyl-alpha-D-glucosamine from N-acetyl-alpha-D-glucosamine 1-phosphate: step 1/1. It functions in the pathway bacterial outer membrane biogenesis; LPS lipid A biosynthesis. In terms of biological role, catalyzes the last two sequential reactions in the de novo biosynthetic pathway for UDP-N-acetylglucosamine (UDP-GlcNAc). The C-terminal domain catalyzes the transfer of acetyl group from acetyl coenzyme A to glucosamine-1-phosphate (GlcN-1-P) to produce N-acetylglucosamine-1-phosphate (GlcNAc-1-P), which is converted into UDP-GlcNAc by the transfer of uridine 5-monophosphate (from uridine 5-triphosphate), a reaction catalyzed by the N-terminal domain. In Psychromonas ingrahamii (strain DSM 17664 / CCUG 51855 / 37), this protein is Bifunctional protein GlmU.